The sequence spans 326 residues: H-2 class I histocompatibility antigen, Q8 alpha chain (326 aa).

A signal peptide spans 1–21 (MALTMLLLLVAAALTLIETRA). The segment at 22 to 111 (GPHSLRYFHT…AQRYYNQSKG (90 aa)) is alpha-1. Over 22–305 (GPHSLRYFHT…EPPPSTVSNM (284 aa)) the chain is Extracellular. N-linked (GlcNAc...) asparagine glycosylation is present at asparagine 107. The tract at residues 112–203 (GSHTLQWMYG…QLRKETLLCT (92 aa)) is alpha-2. Disulfide bonds link cysteine 122-cysteine 185 and cysteine 224-cysteine 280. Positions 204–295 (DPPKAHVTHH…GLPEPLTLRW (92 aa)) are alpha-3. The region spanning 206 to 294 (PKAHVTHHPR…EGLPEPLTLR (89 aa)) is the Ig-like C1-type domain. An N-linked (GlcNAc...) asparagine glycan is attached at asparagine 277. The tract at residues 296 to 305 (EPPPSTVSNM) is connecting peptide. A helical transmembrane segment spans residues 306–326 (ANVAILVVLVAWPSLELWWIL).

The protein belongs to the MHC class I family. As to quaternary structure, heterodimer of an alpha chain and a beta chain (beta-2-microglobulin).

It is found in the membrane. Its function is as follows. Involved in the presentation of foreign antigens to the immune system. This is H-2 class I histocompatibility antigen, Q8 alpha chain (H2-Q8) from Mus musculus (Mouse).